The primary structure comprises 474 residues: Cysteine--tRNA ligase (474 aa).

Zn(2+) is bound at residue cysteine 34. The 'HIGH' region motif lies at 36-46; it reads PTVYDYAHIGN. Positions 219, 244, and 248 each coordinate Zn(2+). Residues 276–280 carry the 'KMSKS' region motif; it reads KMSKS. An ATP-binding site is contributed by lysine 279.

It belongs to the class-I aminoacyl-tRNA synthetase family. As to quaternary structure, monomer. Zn(2+) is required as a cofactor.

The protein resides in the cytoplasm. It catalyses the reaction tRNA(Cys) + L-cysteine + ATP = L-cysteinyl-tRNA(Cys) + AMP + diphosphate. The protein is Cysteine--tRNA ligase (cysS) of Chlamydia pneumoniae (Chlamydophila pneumoniae).